We begin with the raw amino-acid sequence, 123 residues long: Omega-oxotoxin-Ot1a (123 aa).

An N-terminal signal peptide occupies residues 1–16 (MKIVLVFVCTLYLAQA). Positions 17 to 54 (TYLSEQDVNEVSEFLEALDQANEAASEMVEAAETEEAR) are excised as a propeptide. Residues 55–122 (DWECLPLHSS…GKINTCDKYK (68 aa)) form the Oxytoxin-type inhibitor cystine knot (ICK) domain. Cystine bridges form between C58–C72, C65–C77, C69–C118, C71–C106, and C79–C104.

It belongs to the spiderine family. Spiderine subfamily. Mass spectrometry data suggest a carboxylated free C-terminal residue. In terms of tissue distribution, expressed by the venom gland.

The protein resides in the secreted. In terms of biological role, weak blocker of vertebrate P/Q-, N- and L-type voltage-gated calcium channels (Cav1 and Cav2). Is both paralytic and lethal when injected into lepidopteran larvae. Is not toxic to mice. In Oxyopes takobius (Lynx spider), this protein is Omega-oxotoxin-Ot1a.